Here is a 656-residue protein sequence, read N- to C-terminus: MQLRHINIRALIAEAGGDPWAIEHSLHAGRPAQIAELAEAFHAAGRCTAEANAAFEEARRRFEASWNRENGEHPINDSAEVQRVTAALGVQSLQLPKIGVDLENIAADLAEAQRAAAGRIATLESQLQRIDDQLDQALELEHDPRLAAAERSELDALITCLEQDAIDDTASALGQLQSIRAGYSDHLQQSLAMLRADGYDGAGLQGLDAPQSPVKPEEPIQIPPPGTGAPEVHRWWTSLTSEERQRLIAEHPEQIGNLNGVPVSARSDANIAVMTRDLNRVRDIATRYRTSVDDVLGDPAKYGLSAGDITRYRNADETKKGLDHNARNDPRNPSPVYLFAYDPMAFGGKGRAAIAIGNPDTAKHTAVIVPGTSSSVKGGWLHDNHDDALNLFNQAKAADPNNPTAVIAWMGYDAPNDFTDPRIATPMLARIGGAALAEDVNGLWVTHLGVGQNVTVLGHSYGSTTVADAFALGGMHANDAVLLGCPGTDLAHSAASFHLDGGRVYVGAASTDPISMLGQLDSLSQYVNRGNLAGQLQGLAVGLGTDPAGDGFGSVRFRAEVPNSDGINPHDHSYYYHRGSEALRSMADIASGHGDALASDGMLAQPRHQPGVEIDIPGLGSVEIDIPGTPASIDPEWSRPPGSITDDHVFDAPLHR.

Residues 623 to 656 (EIDIPGTPASIDPEWSRPPGSITDDHVFDAPLHR) form a disordered region. Over residues 645-656 (TDDHVFDAPLHR) the composition is skewed to basic and acidic residues.

This is an uncharacterized protein from Mycobacterium tuberculosis (strain CDC 1551 / Oshkosh).